A 294-amino-acid chain; its full sequence is MKDLPDRRLLLVHAHPDDESINNGATMARYAAEGAQVTLVTCTLGEEGEVIPPALAHLTPDRDDALGPYRVGELAAAMKELGVTDHRFLGGPGRYRDSGMMGGEQNHRAGAFWAADLDEAAGHLVAVVREVRPQVLVTYDPDGGYGHPDHIQAHRVAVRAAELAADPAFRPELGTPWEIAKVYWNRVPRPVAEEGFARLRLALPGTRFAKSAAVDDVPGVVDESVITTEIDGTPFAAAKAAAMRAHATQVEVDGPWFALSNELAQPLFTTEYYELVRGERGSPRETDLFEGVAP.

Zn(2+) contacts are provided by His15, Asp18, and His150.

Belongs to the MshB deacetylase family. Zn(2+) is required as a cofactor.

It catalyses the reaction 1D-myo-inositol 2-acetamido-2-deoxy-alpha-D-glucopyranoside + H2O = 1D-myo-inositol 2-amino-2-deoxy-alpha-D-glucopyranoside + acetate. Catalyzes the deacetylation of 1D-myo-inositol 2-acetamido-2-deoxy-alpha-D-glucopyranoside (GlcNAc-Ins) in the mycothiol biosynthesis pathway. The protein is 1D-myo-inositol 2-acetamido-2-deoxy-alpha-D-glucopyranoside deacetylase of Streptomyces avermitilis (strain ATCC 31267 / DSM 46492 / JCM 5070 / NBRC 14893 / NCIMB 12804 / NRRL 8165 / MA-4680).